Reading from the N-terminus, the 436-residue chain is GTPase Der (436 aa).

EngA-type G domains are found at residues 4–167 (PIVA…GEEE) and 176–351 (IRLS…ENHK). Residues 10–17 (GRPNVGKS), 57–61 (DTGGI), 119–122 (NKVD), 182–189 (GRPNVGKS), 229–233 (DTAGM), and 294–297 (NKWD) each bind GTP. The 85-residue stretch at 352-436 (KRVQSSTLNE…PIHIIARKRN (85 aa)) folds into the KH-like domain.

The protein belongs to the TRAFAC class TrmE-Era-EngA-EngB-Septin-like GTPase superfamily. EngA (Der) GTPase family. In terms of assembly, associates with the 50S ribosomal subunit.

Functionally, GTPase that plays an essential role in the late steps of ribosome biogenesis. The chain is GTPase Der from Staphylococcus aureus (strain USA300).